The following is a 431-amino-acid chain: Salivary plasminogen activator beta (431 aa).

The first 36 residues, 1-36 (MVNTMKTKLLCVLLLCGAVFSLPRQETYRQLARGSR), serve as a signal peptide directing secretion. Residues 37–75 (AYGGCSELRCFNGGTCWQAASFSDFVCQCPKGYTGKQCE) form the EGF-like domain. Disulfide bonds link C41/C52, C46/C63, C65/C74, C82/C163, C103/C145, C134/C158, C168/C299, C211/C227, C219/C288, C313/C388, C345/C361, and C378/C406. The Kringle domain maps to 82–163 (CYKDQGVTYR…ILEFCSVPVC (82 aa)). An N-linked (GlcNAc...) asparagine glycan is attached at N139. A Peptidase S1 domain is found at 180–430 (STGGLFTDIT…YLGWIRDNMR (251 aa)). Catalysis depends on charge relay system residues H226 and D275. An N-linked (GlcNAc...) asparagine glycan is attached at N352. S382 serves as the catalytic Charge relay system.

This sequence belongs to the peptidase S1 family. Monomer.

Its subcellular location is the secreted. It carries out the reaction Specific cleavage of Arg-|-Val bond in plasminogen to form plasmin.. In terms of biological role, probably essential to support the feeding habits of this exclusively haematophagous animal. Probable potent thrombolytic agent. The chain is Salivary plasminogen activator beta from Desmodus rotundus (Vampire bat).